The primary structure comprises 133 residues: Large-conductance mechanosensitive channel (133 aa).

2 consecutive transmembrane segments (helical) span residues 10 to 30 (FAVK…GAFG) and 76 to 96 (GAFI…FSMV).

It belongs to the MscL family. As to quaternary structure, homopentamer.

It localises to the cell inner membrane. Channel that opens in response to stretch forces in the membrane lipid bilayer. May participate in the regulation of osmotic pressure changes within the cell. This Haemophilus ducreyi (strain 35000HP / ATCC 700724) protein is Large-conductance mechanosensitive channel.